We begin with the raw amino-acid sequence, 522 residues long: BTB/POZ domain-containing protein 3 (522 aa).

The region spanning Ala120–Ala190 is the BTB domain. Residues Phe235–Gln300 form the BACK domain.

As to expression, strongly expressed in the primary visual cortex.

The protein localises to the cytoplasm. It localises to the cytosol. It is found in the nucleus. In terms of biological role, acts as a key regulator of dendritic field orientation during development of sensory cortex. Also directs dendrites toward active axon terminals when ectopically expressed. The sequence is that of BTB/POZ domain-containing protein 3 (BTBD3) from Callithrix jacchus (White-tufted-ear marmoset).